The primary structure comprises 346 residues: Phosphoribosylformylglycinamidine cyclo-ligase (346 aa).

Belongs to the AIR synthase family.

Its subcellular location is the cytoplasm. The enzyme catalyses 2-formamido-N(1)-(5-O-phospho-beta-D-ribosyl)acetamidine + ATP = 5-amino-1-(5-phospho-beta-D-ribosyl)imidazole + ADP + phosphate + H(+). It participates in purine metabolism; IMP biosynthesis via de novo pathway; 5-amino-1-(5-phospho-D-ribosyl)imidazole from N(2)-formyl-N(1)-(5-phospho-D-ribosyl)glycinamide: step 2/2. The chain is Phosphoribosylformylglycinamidine cyclo-ligase from Vibrio vulnificus (strain YJ016).